A 219-amino-acid chain; its full sequence is UPF0502 protein Ppro_2903 (219 aa).

This sequence belongs to the UPF0502 family.

This Pelobacter propionicus (strain DSM 2379 / NBRC 103807 / OttBd1) protein is UPF0502 protein Ppro_2903.